Here is a 1010-residue protein sequence, read N- to C-terminus: Collagen, type I, alpha 1b (1010 aa).

A compositionally biased stretch (pro residues) spans 1–24; the sequence is SSGPPQPGPMGPMGPRGPPGPPGS. Residues 1-969 are disordered; it reads SSGPPQPGPM…PDGTQKSPAR (969 aa). The span at 25–48 shows a compositional bias: low complexity; that stretch reads SGPQGFTGPPGEPGEPGASGAMGS. Residues 58–72 show a composition bias toward basic and acidic residues; the sequence is NGDDGEPGKPGRPGE. Over residues 73-82 the composition is skewed to low complexity; it reads RGAAGPQGAR. Residues 145-159 show a composition bias toward pro residues; that stretch reads GGPPGPTGPAGPPGF. Gly residues-rich tracts occupy residues 160–179 and 203–212; these read PGGA…GNEG and GTDGGPGAKG. 2 stretches are compositionally biased toward low complexity: residues 213 to 268 and 300 to 310; these read SPGA…PGPA and ERGAPGARGFP. The span at 311–323 shows a compositional bias: gly residues; the sequence is GADGGAGGKGAPG. Composition is skewed to low complexity over residues 324-343 and 405-448; these read ERGA…PGSK and PAGA…APGE. Composition is skewed to gly residues over residues 468–477, 486–495, and 519–528; these read GAPGLGGPTG, GAPGGLGAPG, and GGKGGDGAPG. Composition is skewed to low complexity over residues 559–568 and 581–596; these read VAGPTGPRGA and AGFA…PGAK. 2 stretches are compositionally biased toward gly residues: residues 609-618 and 633-642; these read GAPGPGGPVG and GARGGAGPPG. 3 stretches are compositionally biased toward low complexity: residues 643–662, 679–701, and 796–805; these read ATGF…AGAA, ETGA…SGEK, and APGAVGPSGK. Residues 834 to 847 are compositionally biased toward basic and acidic residues; sequence KGDRGEAGEAGDRG. Residues 872 to 900 show a composition bias toward low complexity; it reads PAGASGPAGPRGPAGSNGAAGKDGMNGLP. Over residues 918–933 the composition is skewed to pro residues; that stretch reads AGPPGPPGPAGPPGPP. A Fibrillar collagen NC1 domain is found at 982–1010; it reads RLPLLDLAPMDVGAPDQEFGVEVGPVCFL.

The protein belongs to the fibrillar collagen family.

The protein localises to the secreted. Its subcellular location is the extracellular space. It localises to the extracellular matrix. The chain is Collagen, type I, alpha 1b from Epinephelus marginatus (Dusky grouper).